Here is a 1613-residue protein sequence, read N- to C-terminus: Myosin-IIIa (1613 aa).

In terms of domain architecture, Protein kinase spans 21–287 (WEIIETIGKG…VSDLLKHKFI (267 aa)). ATP contacts are provided by residues 27–35 (IGKGTYGKV) and Lys50. The active-site Proton acceptor is Asp150. The region spanning 338-1052 (KDVDDLATLD…HVEQLNLMRK (715 aa)) is the Myosin motor domain. The tract at residues 933 to 955 (LMDLLSKMVVGQPHFVRCIKPNN) is actin-binding. IQ domains lie at 1054–1083 (ATNK…KRKS) and 1081–1110 (RKSS…MKNT). Disordered stretches follow at residues 1136 to 1168 (VKKQ…TAPF) and 1476 to 1506 (SGVS…EDST). Over residues 1145–1161 (PTNESNTSTPNNKESPS) the composition is skewed to low complexity. The interaction with MORN4 stretch occupies residues 1398 to 1476 (EGVHHSKMVD…RHVSTHQYLS (79 aa)). Basic residues predominate over residues 1488–1497 (RPPRRPRKPK).

It in the C-terminal section; belongs to the TRAFAC class myosin-kinesin ATPase superfamily. Myosin family. In the N-terminal section; belongs to the protein kinase superfamily. STE Ser/Thr protein kinase family. Interacts with MORN4. Interacts (via C-terminus) with ESPN and ESPNL. Expressed in the cochlear hair cells (at protein level). Expressed in utricle hair bundles (at protein level).

The protein localises to the cytoplasm. Its subcellular location is the cytoskeleton. It is found in the cell projection. The protein resides in the filopodium tip. It localises to the stereocilium. It catalyses the reaction L-seryl-[protein] + ATP = O-phospho-L-seryl-[protein] + ADP + H(+). The enzyme catalyses L-threonyl-[protein] + ATP = O-phospho-L-threonyl-[protein] + ADP + H(+). The catalysed reaction is ATP + H2O = ADP + phosphate + H(+). Functionally, actin-dependent motor protein with a protein kinase activity, playing an essential role in hearing. Probably plays also a role in vision. Required for normal cochlear hair bundle development and hearing. Plays an important role in the early steps of cochlear hair bundle morphogenesis. Influences the number and lengths of stereocilia to be produced and limits the growth of microvilli within the forming auditory hair bundles thereby contributing to the architecture of the hair bundle, including its staircase pattern. Involved in the elongation of actin in stereocilia tips by transporting the actin regulatory factor ESPN to the plus ends of actin filaments. This is Myosin-IIIa (Myo3a) from Mus musculus (Mouse).